The following is a 446-amino-acid chain: Tol-Pal system protein TolB (446 aa).

Residues 1-19 (MLLRYLFILFIIIPIKAFA) form the signal peptide.

The protein belongs to the TolB family. As to quaternary structure, the Tol-Pal system is composed of five core proteins: the inner membrane proteins TolA, TolQ and TolR, the periplasmic protein TolB and the outer membrane protein Pal. They form a network linking the inner and outer membranes and the peptidoglycan layer.

It localises to the periplasm. Its function is as follows. Part of the Tol-Pal system, which plays a role in outer membrane invagination during cell division and is important for maintaining outer membrane integrity. This Pelagibacter ubique (strain HTCC1062) protein is Tol-Pal system protein TolB.